Reading from the N-terminus, the 157-residue chain is Large ribosomal subunit protein eL24 (157 aa).

Residues 94–157 are disordered; the sequence is RNQKPEVRKA…ISAPRVGGKR (64 aa). The span at 96–117 shows a compositional bias: basic and acidic residues; that stretch reads QKPEVRKAQREQAIRAAKESKK. Residues 123 to 140 show a composition bias toward low complexity; sequence KKPAAASAKTSAKTAQKP.

Belongs to the eukaryotic ribosomal protein eL24 family. Component of the large ribosomal subunit.

It is found in the cytoplasm. Its function is as follows. Component of the large ribosomal subunit. The ribosome is a large ribonucleoprotein complex responsible for the synthesis of proteins in the cell. The chain is Large ribosomal subunit protein eL24 (rpl24) from Gillichthys mirabilis (Long-jawed mudsucker).